The following is a 309-amino-acid chain: Tagatose-6-phosphate kinase (309 aa).

Belongs to the carbohydrate kinase PfkB family. LacC subfamily.

The enzyme catalyses D-tagatofuranose 6-phosphate + ATP = D-tagatofuranose 1,6-bisphosphate + ADP + H(+). It functions in the pathway carbohydrate metabolism; D-tagatose 6-phosphate degradation; D-glyceraldehyde 3-phosphate and glycerone phosphate from D-tagatose 6-phosphate: step 1/2. The protein is Tagatose-6-phosphate kinase of Streptococcus sanguinis (strain SK36).